The sequence spans 273 residues: Large ribosomal subunit protein uL2c (273 aa).

Positions 1 to 31 (MAIHLSKTSSPSTRNGAVNSQVKSNSRNRLI) are enriched in polar residues. 2 disordered regions span residues 1–53 (MAIH…GHRG) and 222–273 (MNPV…RRSK).

This sequence belongs to the universal ribosomal protein uL2 family. As to quaternary structure, part of the 50S ribosomal subunit.

Its subcellular location is the plastid. The protein resides in the chloroplast. In Pisum sativum (Garden pea), this protein is Large ribosomal subunit protein uL2c (rpl2).